Reading from the N-terminus, the 483-residue chain is Bifunctional protein HldE (483 aa).

Residues 1–327 (MDDALAHLPR…ACASSAQGEP (327 aa)) form a ribokinase region. 201–204 (NRKE) serves as a coordination point for ATP. Aspartate 272 is an active-site residue. The tract at residues 354 to 483 (FTNGCFDLLH…TTNLIARMNS (130 aa)) is cytidylyltransferase.

The protein in the N-terminal section; belongs to the carbohydrate kinase PfkB family. This sequence in the C-terminal section; belongs to the cytidylyltransferase family. Homodimer.

It carries out the reaction D-glycero-beta-D-manno-heptose 7-phosphate + ATP = D-glycero-beta-D-manno-heptose 1,7-bisphosphate + ADP + H(+). The enzyme catalyses D-glycero-beta-D-manno-heptose 1-phosphate + ATP + H(+) = ADP-D-glycero-beta-D-manno-heptose + diphosphate. The protein operates within nucleotide-sugar biosynthesis; ADP-L-glycero-beta-D-manno-heptose biosynthesis; ADP-L-glycero-beta-D-manno-heptose from D-glycero-beta-D-manno-heptose 7-phosphate: step 1/4. It participates in nucleotide-sugar biosynthesis; ADP-L-glycero-beta-D-manno-heptose biosynthesis; ADP-L-glycero-beta-D-manno-heptose from D-glycero-beta-D-manno-heptose 7-phosphate: step 3/4. Functionally, catalyzes the phosphorylation of D-glycero-D-manno-heptose 7-phosphate at the C-1 position to selectively form D-glycero-beta-D-manno-heptose-1,7-bisphosphate. In terms of biological role, catalyzes the ADP transfer from ATP to D-glycero-beta-D-manno-heptose 1-phosphate, yielding ADP-D-glycero-beta-D-manno-heptose. The protein is Bifunctional protein HldE of Caulobacter vibrioides (strain ATCC 19089 / CIP 103742 / CB 15) (Caulobacter crescentus).